An 854-amino-acid chain; its full sequence is Discoidin domain-containing receptor 2 (854 aa).

The signal sequence occupies residues 1 to 21 (MIPIPRMPLVLLLLLLILGSA). Residues 22-399 (KAQVNPAICR…MLKVDDSNTR (378 aa)) lie on the Extracellular side of the membrane. Positions 30–185 (CRYPLGMSGG…VCMRVELYGC (156 aa)) constitute an F5/8 type C domain. 2 disulfides stabilise this stretch: C30-C185 and C73-C177. 5 N-linked (GlcNAc...) asparagine glycosylation sites follow: N121, N213, N261, N280, and N372. A helical membrane pass occupies residues 400–421 (ILIGCLVAIIFILLAIIVIILW). Residues 422–854 (RQFWQKMLEK…HLLLLQQGAE (433 aa)) lie on the Cytoplasmic side of the membrane. The segment at 452–471 (SMFNNNRSSSPSEQESNSTY) is disordered. Positions 455 to 469 (NNNRSSSPSEQESNS) are enriched in low complexity. The residue at position 471 (Y471) is a Phosphotyrosine; by SRC and autocatalysis. Residues 563–848 (LAFKEKLGEG…PSFQEIHLLL (286 aa)) form the Protein kinase domain. ATP contacts are provided by residues 569–577 (LGEGQFGEV) and K608. The active-site Proton acceptor is the D709. A phosphotyrosine; by SRC and autocatalysis mark is found at Y735, Y739, and Y740.

It belongs to the protein kinase superfamily. Tyr protein kinase family. Insulin receptor subfamily. Binds hydroxyproline-rich sequence motifs in fibrillar, glycosylated collagen, such as the GQOGVMGFO motif, where O stands for hydroxyproline. Interacts with SRC. Interacts (tyrosine phosphorylated) with SHC1. In terms of processing, N-glycosylated. Post-translationally, tyrosine phosphorylated in response to collagen binding. Phosphorylated by SRC; this is required for activation and subsequent autophosphorylation on additional tyrosine residues. Widely expressed. Detected in lung, ovary, skin and in testis Leydig cells (at protein level). Widely expressed. Detected at high levels in heart, lung, skeletal muscle, central nervous system (CNS) and kidney, and at lower levels in brain and testis. Detected in chondrocytes in tibia growth plates of young mice.

The protein localises to the cell membrane. It carries out the reaction L-tyrosyl-[protein] + ATP = O-phospho-L-tyrosyl-[protein] + ADP + H(+). With respect to regulation, present in an inactive state in the absence of collagen binding and phosphorylation by SRC. Tyrosine phosphorylation enhances the affinity for ATP and the catalytic activity. In terms of biological role, tyrosine kinase that functions as a cell surface receptor for fibrillar collagen and regulates cell differentiation, remodeling of the extracellular matrix, cell migration and cell proliferation. Required for normal bone development. Regulates osteoblast differentiation and chondrocyte maturation via a signaling pathway that involves MAP kinases and leads to the activation of the transcription factor RUNX2. Regulates remodeling of the extracellular matrix by up-regulation of the collagenases MMP1, MMP2 and MMP13, and thereby facilitates cell migration and tumor cell invasion. Promotes fibroblast migration and proliferation, and thereby contributes to cutaneous wound healing. The sequence is that of Discoidin domain-containing receptor 2 (Ddr2) from Mus musculus (Mouse).